We begin with the raw amino-acid sequence, 89 residues long: Small ribosomal subunit protein uS17 (89 aa).

This sequence belongs to the universal ribosomal protein uS17 family. Part of the 30S ribosomal subunit.

One of the primary rRNA binding proteins, it binds specifically to the 5'-end of 16S ribosomal RNA. This is Small ribosomal subunit protein uS17 from Leptospira borgpetersenii serovar Hardjo-bovis (strain JB197).